Reading from the N-terminus, the 354-residue chain is MIPKKIIIMAGGSGGHVFPGLTIARYLIEKGWLVNWIGTKNSIESRIIPTYGIKIHYISIKGLRNTSLKNLIISPIYILRAYYAVKKIIKTWSPDIVLGMGGYVSGPGGVASWNCNIPLLLHEQNKIAGITNKWLSRISTKNMQASPGVLRNAEVVGNPVCQSIIKVPNPINRFKNRTGLLRVLVIGGSQGSSILNRILPKVSFLLKEKIIFWHQTGNYELEKTKKKYNKLRLNQNLITSFIKNIASAYEWADLIICRSGALTVSEISIVGLGAIFIPYPHKDKQQHRNAEDLELIGAAKIIDQSNLNTKLIVNILNSLDRDKLFIMAKKAHSLGVRDAIFNIFNVINKISKKT.

Residues 13–15, Asn125, Ser189, Ile242, 261–266, and Gln286 each bind UDP-N-acetyl-alpha-D-glucosamine; these read SGG and ALTVSE.

The protein belongs to the glycosyltransferase 28 family. MurG subfamily.

Its subcellular location is the cell inner membrane. The enzyme catalyses di-trans,octa-cis-undecaprenyl diphospho-N-acetyl-alpha-D-muramoyl-L-alanyl-D-glutamyl-meso-2,6-diaminopimeloyl-D-alanyl-D-alanine + UDP-N-acetyl-alpha-D-glucosamine = di-trans,octa-cis-undecaprenyl diphospho-[N-acetyl-alpha-D-glucosaminyl-(1-&gt;4)]-N-acetyl-alpha-D-muramoyl-L-alanyl-D-glutamyl-meso-2,6-diaminopimeloyl-D-alanyl-D-alanine + UDP + H(+). The protein operates within cell wall biogenesis; peptidoglycan biosynthesis. Its function is as follows. Cell wall formation. Catalyzes the transfer of a GlcNAc subunit on undecaprenyl-pyrophosphoryl-MurNAc-pentapeptide (lipid intermediate I) to form undecaprenyl-pyrophosphoryl-MurNAc-(pentapeptide)GlcNAc (lipid intermediate II). This is UDP-N-acetylglucosamine--N-acetylmuramyl-(pentapeptide) pyrophosphoryl-undecaprenol N-acetylglucosamine transferase from Buchnera aphidicola subsp. Acyrthosiphon pisum (strain 5A).